Here is a 366-residue protein sequence, read N- to C-terminus: Histidinol-phosphate aminotransferase (366 aa).

The residue at position 227 (Lys227) is an N6-(pyridoxal phosphate)lysine.

It belongs to the class-II pyridoxal-phosphate-dependent aminotransferase family. Histidinol-phosphate aminotransferase subfamily. As to quaternary structure, homodimer. Requires pyridoxal 5'-phosphate as cofactor.

It catalyses the reaction L-histidinol phosphate + 2-oxoglutarate = 3-(imidazol-4-yl)-2-oxopropyl phosphate + L-glutamate. Its pathway is amino-acid biosynthesis; L-histidine biosynthesis; L-histidine from 5-phospho-alpha-D-ribose 1-diphosphate: step 7/9. This Campylobacter hominis (strain ATCC BAA-381 / DSM 21671 / CCUG 45161 / LMG 19568 / NCTC 13146 / CH001A) protein is Histidinol-phosphate aminotransferase.